Consider the following 113-residue polypeptide: Protein AaeX (113 aa).

The next 2 membrane-spanning stretches (helical) occupy residues Leu-3 to Leu-23 and Phe-43 to Ser-63.

Belongs to the AaeX family.

It is found in the cell membrane. The protein is Protein AaeX of Sodalis glossinidius (strain morsitans).